A 412-amino-acid polypeptide reads, in one-letter code: Pentatricopeptide repeat-containing protein At3g60980, mitochondrial (412 aa).

Residues Met1–Pro18 constitute a mitochondrion transit peptide. PPR repeat units follow at residues Thr69–Pro104, Asn105–His139, Ser143–Pro178, Asp179–Ala213, Val230–Leu264, Cys266–Lys296, Asp305–Leu339, Ile344–Tyr371, and Asp373–Glu407.

Belongs to the PPR family. P subfamily.

The protein localises to the mitochondrion. The chain is Pentatricopeptide repeat-containing protein At3g60980, mitochondrial from Arabidopsis thaliana (Mouse-ear cress).